The following is a 631-amino-acid chain: Chaperone protein DnaK (631 aa).

A Phosphothreonine; by autocatalysis modification is found at T175. Positions 586-631 are disordered; that stretch reads GAEGAAAGAGAAGAAGAGASAGSASGSDDDTVEAEVVDDDDDKDNK. The span at 602-611 shows a compositional bias: low complexity; sequence AGASAGSASG. Acidic residues predominate over residues 612-631; that stretch reads SDDDTVEAEVVDDDDDKDNK.

Belongs to the heat shock protein 70 family.

Its function is as follows. Acts as a chaperone. This Bifidobacterium longum subsp. infantis (strain ATCC 15697 / DSM 20088 / JCM 1222 / NCTC 11817 / S12) protein is Chaperone protein DnaK.